The following is a 56-amino-acid chain: Serine protease inhibitor Kazal-type 1 (56 aa).

Positions 3–56 (LGREAKCNNNAGGCTKIYNPVCGTDGNTYPNECMLCVENQKRQMPVLIQRSGPC) constitute a Kazal-like domain. Cystine bridges form between Cys-9–Cys-38, Cys-16–Cys-35, and Cys-24–Cys-56.

It is found in the secreted. Its function is as follows. Serine protease inhibitor which exhibits anti-trypsin activity. In the pancreas, protects against trypsin-catalyzed premature activation of zymogens. In the male reproductive tract, binds to sperm heads where it modulates sperm capacitance by inhibiting calcium uptake and nitrogen oxide (NO) production. This is Serine protease inhibitor Kazal-type 1 (SPINK1) from Equus caballus (Horse).